A 305-amino-acid polypeptide reads, in one-letter code: Taste receptor type 2 member 13 (305 aa).

The Extracellular portion of the chain corresponds to 1-7 (MGSSLYD). The helical transmembrane segment at 8–28 (ILTIVMIAEFIFGNVTNGFIV) threads the bilayer. Topologically, residues 29-42 (LTNCIAWLSKRTLS) are cytoplasmic. A helical transmembrane segment spans residues 43–63 (FIGWIQLFLAISRVVLIWEML). The Extracellular portion of the chain corresponds to 64-88 (LAWLKYMKYSFSYLAGTELRVMMLT). Residues 89–109 (WVVSNHFSLWLATILSIFYLL) form a helical membrane-spanning segment. At 110–128 (KIASFSRPVFLYLKWRVKK) the chain is on the cytoplasmic side. Residues 129-149 (VLLLILLGNLIFLMFNILQIN) form a helical membrane-spanning segment. Topologically, residues 150-182 (THIEDWMDQYKRNITWDSRVNEFVGFSNLVLLE) are extracellular. Asn-162 is a glycosylation site (N-linked (GlcNAc...) asparagine). A helical transmembrane segment spans residues 183 to 203 (MIMFSVTPFTVALVSFILLIF). Topologically, residues 204–232 (SLWKHLQKMHLSSRGERDPSTKAHVNALR) are cytoplasmic. Residues 233–253 (IMVSFLLLYATYFISFFISLI) traverse the membrane as a helical segment. Residues 254 to 262 (PMAHKKGLD) lie on the Extracellular side of the membrane. Residues 263–283 (LMFSLTVGLFYPSSHSFILIL) traverse the membrane as a helical segment. At 284-305 (GHSNLRHSSCLVITYLRCKEKD) the chain is on the cytoplasmic side.

Belongs to the G-protein coupled receptor T2R family. In terms of tissue distribution, expressed in subsets of taste receptor cells of the tongue and palate epithelium and exclusively in gustducin-positive cells. Expressed in 15% taste bud cells in circumvallate and foliate papillae but only in 2% in fungiform papillae. Expressed in the duodenum, antrum and fundus (part of the stomach).

The protein resides in the membrane. In terms of biological role, receptor that may play a role in the perception of bitterness and is gustducin-linked. May play a role in sensing the chemical composition of the gastrointestinal content. The activity of this receptor may stimulate alpha gustducin, mediate PLC-beta-2 activation and lead to the gating of TRPM5. The chain is Taste receptor type 2 member 13 (Tas2r13) from Rattus norvegicus (Rat).